We begin with the raw amino-acid sequence, 87 residues long: Putative defensin-like protein 235 (87 aa).

The signal sequence occupies residues 1–26 (MRSATFFLVSCVLMSFVLSHVKEVEA). Cystine bridges form between C46/C73, C54/C82, and C71/C84.

It belongs to the DEFL family.

It localises to the secreted. This chain is Putative defensin-like protein 235 (SCRL26), found in Arabidopsis thaliana (Mouse-ear cress).